A 590-amino-acid chain; its full sequence is uncharacterized protein (590 aa).

Residues 1 to 68 (MKFSKPKFSM…SQRVWGPWNY (68 aa)) are Cytoplasmic-facing. Residues 69–89 (VAFWLADSVNVNTWMIAGTAV) traverse the membrane as a helical segment. The Extracellular portion of the chain corresponds to 90–94 (ESGLS). A helical membrane pass occupies residues 95-115 (WWEAWITVWVGYTIAAFILTI). Over 116–124 (AGRAGAVYH) the chain is Cytoplasmic. The helical transmembrane segment at 125–145 (ISFPVLSRSSFGIWGSLWPIL) threads the bilayer. Topologically, residues 146-149 (NRAV) are extracellular. A helical transmembrane segment spans residues 150 to 170 (MACVWYGVQAWIGGECVTLMI). At 171-194 (RSIWPSFSHIPNTMAKSGTETYQW) the chain is on the cytoplasmic side. Residues 195–215 (VGFFIFWLISNVAIWFPVYQI) traverse the membrane as a helical segment. Over 216 to 218 (RHL) the chain is Extracellular. Residues 219 to 239 (FTAKSFLAPPAAIAFLIWALV) traverse the membrane as a helical segment. The Cytoplasmic segment spans residues 240 to 258 (KAHGAGDAIHAKTQLSTWN). The chain crosses the membrane as a helical span at residues 259–279 (HGWAVTAGIISCLDNFATLIV). Residues 280-298 (NNPDFTRFATTPNAPIFPQ) lie on the Extracellular side of the membrane. A helical transmembrane segment spans residues 299–319 (LITIPMGFGITTLIGVLVGSA). The Cytoplasmic segment spans residues 320–390 (SKSIYGENIW…LCPMFINIRR (71 aa)). The helical transmembrane segment at 391–411 (GGYIASIIGICMCPWNLLSSS) threads the bilayer. Residues 412 to 418 (NSFANSL) lie on the Extracellular side of the membrane. The chain crosses the membrane as a helical span at residues 419–439 (SAYAVFLSSFAGILIADYFVI). Topologically, residues 440–467 (RKGYLKVDALYTINPNEPYWFTYGINLR) are cytoplasmic. A helical membrane pass occupies residues 468–488 (AFASYICGLLINVVGLAGAVG). At 489–500 (DKVPKAALTMNN) the chain is on the extracellular side. The helical transmembrane segment at 501-521 (IAYLLGIVTSFLSHLIICKIF) threads the bilayer. The Cytoplasmic portion of the chain corresponds to 522-590 (PVTACGEKFL…GIDIKESSVF (69 aa)). The disordered stretch occupies residues 566–590 (VSYDSKEKSDDGKSGGIDIKESSVF).

This sequence belongs to the purine-cytosine permease (2.A.39) family.

The protein localises to the cytoplasm. Its subcellular location is the nucleus. The protein resides in the membrane. This is an uncharacterized protein from Schizosaccharomyces pombe (strain 972 / ATCC 24843) (Fission yeast).